Consider the following 255-residue polypeptide: Ribosomal RNA small subunit methyltransferase A (255 aa).

Residues N12, L14, G39, E60, D84, and N106 each contribute to the S-adenosyl-L-methionine site.

This sequence belongs to the class I-like SAM-binding methyltransferase superfamily. rRNA adenine N(6)-methyltransferase family. RsmA subfamily.

Its subcellular location is the cytoplasm. It catalyses the reaction adenosine(1518)/adenosine(1519) in 16S rRNA + 4 S-adenosyl-L-methionine = N(6)-dimethyladenosine(1518)/N(6)-dimethyladenosine(1519) in 16S rRNA + 4 S-adenosyl-L-homocysteine + 4 H(+). Functionally, specifically dimethylates two adjacent adenosines (A1518 and A1519) in the loop of a conserved hairpin near the 3'-end of 16S rRNA in the 30S particle. May play a critical role in biogenesis of 30S subunits. This is Ribosomal RNA small subunit methyltransferase A from Janthinobacterium sp. (strain Marseille) (Minibacterium massiliensis).